The chain runs to 96 residues: uncharacterized protein (96 aa).

Essential for virus function. This is an uncharacterized protein from Saccharolobus solfataricus (Sulfolobus solfataricus).